The primary structure comprises 65 residues: Large ribosomal subunit protein bL35 (65 aa).

Belongs to the bacterial ribosomal protein bL35 family.

The protein is Large ribosomal subunit protein bL35 of Aliarcobacter butzleri (strain RM4018) (Arcobacter butzleri).